The sequence spans 351 residues: Nicotinate-nucleotide--dimethylbenzimidazole phosphoribosyltransferase (351 aa).

The Proton acceptor role is filled by Glu-317.

The protein belongs to the CobT family.

It catalyses the reaction 5,6-dimethylbenzimidazole + nicotinate beta-D-ribonucleotide = alpha-ribazole 5'-phosphate + nicotinate + H(+). The protein operates within nucleoside biosynthesis; alpha-ribazole biosynthesis; alpha-ribazole from 5,6-dimethylbenzimidazole: step 1/2. In terms of biological role, catalyzes the synthesis of alpha-ribazole-5'-phosphate from nicotinate mononucleotide (NAMN) and 5,6-dimethylbenzimidazole (DMB). The polypeptide is Nicotinate-nucleotide--dimethylbenzimidazole phosphoribosyltransferase (Pseudomonas fluorescens (strain SBW25)).